We begin with the raw amino-acid sequence, 446 residues long: MFSIIIPIYNSENYLRYSIESVLNQSIGFKENIELILIDDGSVDSSPQICESFKNLYPNNIKIMKIENSGPSAARNCGLSNVSERSKFIGFLDSDDAFSQNALQSVYDFFCDSEHVNIAVLPVYYTGEKEGGHKLNNRFEKGTRVINILNDYKAIHFYIGGTFYRRHTLTSTVLFDESIKFWEDAIFFNQLLLKEKRYGAVAEGKYFYRKRKEQDSLVDRSWFNKKRYTYLLNECYMTLLMDSFNKYDIVLPYLQFLIVYHIKLFLYPNYRDVYKSVLDQQEQRVFVDDFIKVLKFIDPQFIKEQDMPMYYKEFMFHLLKENTEALENIKKERVLHSSCTVTSAKIKGLRLELTGHFINQYYEMKENDRIYIKYFKRLKKCKRKELKKTIEVWGYKLRDFRYAGFVVEIPIWAFAFDFVLKTPNDSLELNHVNIFKSLLTRVFKKR.

The protein belongs to the glycosyltransferase 2 family.

The protein operates within cell wall biogenesis; poly(glucopyranosyl N-acetylgalactosamine 1-phosphate) teichoic acid biosynthesis. Involved in the biosynthesis of galactosamine-containing minor teichoic acid, a non-essential cell wall polymer in B.subtilis 168. This Bacillus subtilis (strain 168) protein is Minor teichoic acid biosynthesis protein GgaA (ggaA).